Consider the following 1031-residue polypeptide: MEVDVDNQADNHGIHSALKTCEEIKEAKTLYSWIQKVIRCRNQSQSHYKDLEDIKIFAQTNIVATPRDYNEEDFKVIARKEVFSTGLMIELIDKCLVELLSSSDVSDRQKLQCFGFQLKGNQLAKTHLLTALSTQKQYFFQDEWNQVRAMIGNELFRHLYTKYLIFQRTSEGTLVQFCGNNVFDHLKVNDKFDKKQKGGAADMNEPRCCSTCKYNVKNEKDHFLNNINVPNWNNMKSRTRIFYCTHFNRNNQFFKKHEFVSNKNNISAMDRAQTIFTNIFRFNRIRKKLKDKVIEKIAYMLEKVKDFNFNYYLTKSCPLPENWRERKQKIENLINKTREEKSKYYEELFSYTTDNKCVTQFINEFFYNILPKDFLTGRNRKNFQKKVKKYVELNKHELIHKNLLLEKINTREISWMQVETSAKHFYYFDHENIYVLWKLLRWIFEDLVVSLIRCFFYVTEQQKSYSKTYYYRKNIWDVIMKMSIADLKKETLAEVQEKEVEEWKKSLGFAPGKLRLIPKKTTFRPIMTFNKKIVNSDRKTTKLTTNTKLLNSHLMLKTLKNRMFKDPFGFAVFNYDDVMKKYEEFVCKWKQVGQPKLFFATMDIEKCYDSVNREKLSTFLKTTKLLSSDFWIMTAQILKRKNNIVIDSKNFRKKEMKDYFRQKFQKIALEGGQYPTLFSVLENEQNDLNAKKTLIVEAKQRNYFKKDNLLQPVINICQYNYINFNGKFYKQTKGIPQGLCVSSILSSFYYATLEESSLGFLRDESMNPENPNVNLLMRLTDDYLLITTQENNAVLFIEKLINVSRENGFKFNMKKLQTSFPLSPSKFAKYGMDSVEEQNIVQDYCDWIGISIDMKTLALMPNINLRIEGILCTLNLNMQTKKASMWLKKKLKSFLMNNITHYFRKTITTEDFANKTLNKLFISGGYKYMQCAKEYKDHFKKNLAMSSMIDLEVSKIIYSVTRAFFKYLVCNIKDTIFGEEHYPDFFLSTLKHFIEIFSTKKYIFNRVCMILKAKEAKLKSDQCQSLIQYDA.

The region spanning 498–852 (KEVEEWKKSL…DYCDWIGISI (355 aa)) is the Reverse transcriptase domain. D603, D781, and D782 together coordinate Mg(2+).

It belongs to the reverse transcriptase family. Telomerase subfamily. In terms of assembly, component of the telomerase holoenzyme complex composed minimally of the catalytic subunit p123 and the telomerase RNA template component.

It is found in the nucleus. The protein resides in the chromosome. Its subcellular location is the telomere. The enzyme catalyses DNA(n) + a 2'-deoxyribonucleoside 5'-triphosphate = DNA(n+1) + diphosphate. Functionally, telomerase is a ribonucleoprotein enzyme essential for the replication of chromosome termini in most eukaryotes. It elongates telomeres. It is a reverse transcriptase that adds simple sequence repeats to chromosome ends by copying a template sequence within the RNA component of the enzyme. The protein is Telomerase reverse transcriptase of Euplotes aediculatus (Ciliate).